Here is an 819-residue protein sequence, read N- to C-terminus: Lon protease (819 aa).

The span at 1–14 (MNSTNNTDSQNLDP) shows a compositional bias: polar residues. Residues 1–41 (MNSTNNTDSQNLDPNASEVEKLLDESAEAEEKTDDHTPPSE) are disordered. The span at 18-38 (EVEKLLDESAEAEEKTDDHTP) shows a compositional bias: basic and acidic residues. The region spanning 42–239 (LFILPLNKRP…KALVLLKKEL (198 aa)) is the Lon N-terminal domain. Residue 392-399 (GPPGVGKT) participates in ATP binding. The region spanning 634 to 818 (KTPVGVATGL…DDVFKIAFPG (185 aa)) is the Lon proteolytic domain. Catalysis depends on residues S724 and K767.

This sequence belongs to the peptidase S16 family. Homohexamer. Organized in a ring with a central cavity.

Its subcellular location is the cytoplasm. The catalysed reaction is Hydrolysis of proteins in presence of ATP.. Functionally, ATP-dependent serine protease that mediates the selective degradation of mutant and abnormal proteins as well as certain short-lived regulatory proteins. Required for cellular homeostasis and for survival from DNA damage and developmental changes induced by stress. Degrades polypeptides processively to yield small peptide fragments that are 5 to 10 amino acids long. Binds to DNA in a double-stranded, site-specific manner. This chain is Lon protease, found in Chlamydia muridarum (strain MoPn / Nigg).